A 440-amino-acid chain; its full sequence is Alpha-ionylideneethane synthase aba3 (440 aa).

Belongs to the alpha-ionylideneethane synthase family.

Its pathway is hormone biosynthesis. Its function is as follows. Alpha-ionylideneethane synthase; part of the gene cluster that mediates the biosynthesis of abscisic acid (ABA), a phytohormone that acts antagonistically toward salicylic acid (SA), jasmonic acid (JA) and ethylene (ETH) signaling, to impede plant defense responses. The first step of the pathway catalyzes the reaction from farnesyl diphosphate to alpha-ionylideneethane performed by the alpha-ionylideneethane synthase aba3 via a three-step reaction mechanism involving 2 neutral intermediates, beta-farnesene and allofarnesene. The cytochrome P450 monooxygenase aba1 might then be involved in the conversion of alpha-ionylideneethane to alpha-ionylideneacetic acid. Alpha-ionylideneacetic acid is further converted to abscisic acid in 2 steps involving the cytochrome P450 monooxygenase aba2 and the short-chain dehydrogenase/reductase aba4, via the intermediates 1'-deoxy-ABA or 1',4'-trans-diol-ABA, depending on the order of action of these 2 enzymes. Aba2 is responsible for the hydroxylation of carbon atom C-1' and aba4 might be involved in the oxidation of the C-4' carbon atom. In Botryotinia fuckeliana (strain B05.10) (Noble rot fungus), this protein is Alpha-ionylideneethane synthase aba3.